We begin with the raw amino-acid sequence, 49 residues long: Light-harvesting protein B-875 beta chain (49 aa).

The Cytoplasmic portion of the chain corresponds to 2–27; sequence ADKSDLGYTGLTDEQAQELHSVYMSG. Residues histidine 21 and histidine 39 each coordinate a bacteriochlorophyll. The chain crosses the membrane as a helical; Signal-anchor for type II membrane protein span at residues 28 to 45; sequence LWLFSAVAIVAHLAVYIW. Over 46–49 the chain is Periplasmic; sequence RPWF.

Belongs to the antenna complex beta subunit family. As to quaternary structure, the core complex is formed by different alpha and beta chains, binding bacteriochlorophyll molecules, and arranged most probably in tetrameric structures disposed around the reaction center. The non-pigmented gamma chains may constitute additional components.

Its subcellular location is the cell inner membrane. Its function is as follows. Antenna complexes are light-harvesting systems, which transfer the excitation energy to the reaction centers. The polypeptide is Light-harvesting protein B-875 beta chain (pufB) (Cereibacter sphaeroides (strain ATCC 17023 / DSM 158 / JCM 6121 / CCUG 31486 / LMG 2827 / NBRC 12203 / NCIMB 8253 / ATH 2.4.1.) (Rhodobacter sphaeroides)).